Consider the following 76-residue polypeptide: Spore germination protein-like protein YdzR (76 aa).

The protein belongs to the GerPA/GerPF family.

In Bacillus subtilis (strain 168), this protein is Spore germination protein-like protein YdzR (ydzR).